The primary structure comprises 437 residues: Probable N-acetylmuramidase (437 aa).

Positions methionine 1–alanine 57 are cleaved as a signal peptide. 3 disordered regions span residues serine 217 to threonine 244, serine 291 to threonine 319, and alanine 367 to alanine 392. Residues threonine 243–leucine 286 enclose the LysM 1 domain. A compositionally biased stretch (low complexity) spans serine 291–serine 317. Positions threonine 319–valine 362 constitute a LysM 2 domain. The LysM 3 domain maps to serine 393 to isoleucine 436.

It belongs to the glycosyl hydrolase 73 family.

It is found in the secreted. It carries out the reaction Hydrolysis of (1-&gt;4)-beta-linkages between N-acetylmuramic acid and N-acetyl-D-glucosamine residues in a peptidoglycan and between N-acetyl-D-glucosamine residues in chitodextrins.. Functionally, hydrolyzes the cell wall of L.lactis and M.lysodeikticus. Required for cell separation during growth. The sequence is that of Probable N-acetylmuramidase (acmA) from Lactococcus lactis subsp. cremoris (Streptococcus cremoris).